Consider the following 293-residue polypeptide: N-acetylneuraminate lyase (293 aa).

Aceneuramate contacts are provided by serine 47, threonine 48, and tyrosine 136. Residue tyrosine 136 is the Proton donor of the active site. The Schiff-base intermediate with substrate role is filled by lysine 164. Aceneuramate-binding residues include threonine 166, glycine 188, aspartate 190, glutamate 191, serine 207, and tyrosine 251.

This sequence belongs to the DapA family. NanA subfamily. As to quaternary structure, homotetramer.

The protein resides in the cytoplasm. It catalyses the reaction aceneuramate = aldehydo-N-acetyl-D-mannosamine + pyruvate. Its pathway is amino-sugar metabolism; N-acetylneuraminate degradation; D-fructose 6-phosphate from N-acetylneuraminate: step 1/5. Catalyzes the reversible aldol cleavage of N-acetylneuraminic acid (sialic acid; Neu5Ac) to form pyruvate and N-acetylmannosamine (ManNAc) via a Schiff base intermediate. The sequence is that of N-acetylneuraminate lyase from Pasteurella multocida (strain Pm70).